An 89-amino-acid polypeptide reads, in one-letter code: Protein YxiC (89 aa).

The polypeptide is Protein YxiC (yxiC) (Bacillus subtilis (strain 168)).